We begin with the raw amino-acid sequence, 387 residues long: Galactokinase (387 aa).

33–36 lines the substrate pocket; the sequence is EHTD. ATP contacts are provided by residues S67 and 123–129; that span reads GAGLSSS. Residues S129 and E161 each coordinate Mg(2+). D173 serves as the catalytic Proton acceptor. Residue Y223 participates in substrate binding.

Belongs to the GHMP kinase family. GalK subfamily.

The protein localises to the cytoplasm. It carries out the reaction alpha-D-galactose + ATP = alpha-D-galactose 1-phosphate + ADP + H(+). Its pathway is carbohydrate metabolism; galactose metabolism. Its function is as follows. Catalyzes the transfer of the gamma-phosphate of ATP to D-galactose to form alpha-D-galactose-1-phosphate (Gal-1-P). The chain is Galactokinase from Lacticaseibacillus casei (Lactobacillus casei).